The following is a 229-amino-acid chain: Uracil-DNA glycosylase (229 aa).

Catalysis depends on aspartate 64, which acts as the Proton acceptor.

This sequence belongs to the uracil-DNA glycosylase (UDG) superfamily. UNG family.

It localises to the cytoplasm. It carries out the reaction Hydrolyzes single-stranded DNA or mismatched double-stranded DNA and polynucleotides, releasing free uracil.. Functionally, excises uracil residues from the DNA which can arise as a result of misincorporation of dUMP residues by DNA polymerase or due to deamination of cytosine. The chain is Uracil-DNA glycosylase from Escherichia fergusonii (strain ATCC 35469 / DSM 13698 / CCUG 18766 / IAM 14443 / JCM 21226 / LMG 7866 / NBRC 102419 / NCTC 12128 / CDC 0568-73).